The chain runs to 401 residues: Serine--glyoxylate aminotransferase (401 aa).

The residue at position 1 (Met1) is an N-acetylmethionine. Residues 68–70 (TGT), Thr148, and 200–201 (QK) each bind pyridoxal 5'-phosphate. Lys201 lines the 3-hydroxypyruvate pocket. An N6-(pyridoxal phosphate)lysine modification is found at Lys201. Ser204 is subject to Phosphoserine. Arg347 contacts 3-hydroxypyruvate. Residues 399 to 401 (SRI) carry the Microbody targeting signal motif.

Belongs to the class-V pyridoxal-phosphate-dependent aminotransferase family. In terms of assembly, forms homodimers. Interacts with RABGAP22. Pyridoxal 5'-phosphate serves as cofactor. In terms of tissue distribution, widely expressed. Preferentially expressed in green, leafy tissues, root cortex and epidermis, developing siliques and dry seeds.

The protein localises to the peroxisome. It carries out the reaction glyoxylate + L-serine = 3-hydroxypyruvate + glycine. The catalysed reaction is glyoxylate + L-alanine = glycine + pyruvate. The enzyme catalyses L-serine + pyruvate = 3-hydroxypyruvate + L-alanine. It catalyses the reaction 3-hydroxypyruvate + L-asparagine = 2-oxosuccinamate + L-serine. It carries out the reaction L-asparagine + glyoxylate = 2-oxosuccinamate + glycine. The catalysed reaction is L-asparagine + pyruvate = 2-oxosuccinamate + L-alanine. Inhibited by aminooxyacetate and beta-chloro-L-alanine, but not by p-hydroxymercuribenzoate. Photorespiratory enzyme that catalyzes transamination reactions with multiple substrates, including asparagine. Functions exclusively as a catabolic enzyme in Asn metabolism. Involved in root development during seedling establishment after seed germination by regulating serine homeostasis and acetate conversion. This chain is Serine--glyoxylate aminotransferase, found in Arabidopsis thaliana (Mouse-ear cress).